The chain runs to 843 residues: Protein P (843 aa).

Residues 1-177 form a terminal protein domain (TP) region; that stretch reads MPLSYQHFRK…FCGSPYSWEQ (177 aa). Residues 178-346 form a spacer region; that stretch reads ELQHGRLVFQ…YCLTHIVNLL (169 aa). Disordered stretches follow at residues 220–273 and 289–316; these read QSRL…SSTS and LSTSKRQSSSGHAVEFHNIPPSSARSQS. Polar residues predominate over residues 289–299; it reads LSTSKRQSSSG. The interval 347-690 is polymerase/reverse transcriptase domain (RT); it reads EDWGPCTEHG…YLNLYPVARQ (344 aa). Residues 357-600 enclose the Reverse transcriptase domain; the sequence is EHNIRIPRTP…YSLNFMGYVI (244 aa). 3 residues coordinate Mg(2+): aspartate 429, aspartate 551, and aspartate 552.

It belongs to the hepadnaviridae P protein family.

The enzyme catalyses DNA(n) + a 2'-deoxyribonucleoside 5'-triphosphate = DNA(n+1) + diphosphate. It catalyses the reaction Endonucleolytic cleavage to 5'-phosphomonoester.. Activated by host HSP70 and HSP40 in vitro to be able to bind the epsilon loop of the pgRNA. Because deletion of the RNase H region renders the protein partly chaperone-independent, the chaperones may be needed indirectly to relieve occlusion of the RNA-binding site by this domain. Inhibited by several reverse-transcriptase inhibitors: Lamivudine, Adefovir and Entecavir. Functionally, multifunctional enzyme that converts the viral RNA genome into dsDNA in viral cytoplasmic capsids. This enzyme displays a DNA polymerase activity that can copy either DNA or RNA templates, and a ribonuclease H (RNase H) activity that cleaves the RNA strand of RNA-DNA heteroduplexes in a partially processive 3'- to 5'-endonucleasic mode. Neo-synthesized pregenomic RNA (pgRNA) are encapsidated together with the P protein, and reverse-transcribed inside the nucleocapsid. Initiation of reverse-transcription occurs first by binding the epsilon loop on the pgRNA genome, and is initiated by protein priming, thereby the 5'-end of (-)DNA is covalently linked to P protein. Partial (+)DNA is synthesized from the (-)DNA template and generates the relaxed circular DNA (RC-DNA) genome. After budding and infection, the RC-DNA migrates in the nucleus, and is converted into a plasmid-like covalently closed circular DNA (cccDNA). The activity of P protein does not seem to be necessary for cccDNA generation, and is presumably released from (+)DNA by host nuclear DNA repair machinery. This chain is Protein P, found in Hepatitis B virus genotype C subtype ad (isolate Japan/S-179/1988) (HBV-C).